Here is a 487-residue protein sequence, read N- to C-terminus: Glutamyl-tRNA(Gln) amidotransferase subunit A (487 aa).

Residues K82 and S157 each act as charge relay system in the active site. The Acyl-ester intermediate role is filled by S181.

The protein belongs to the amidase family. GatA subfamily. As to quaternary structure, heterotrimer of A, B and C subunits.

It catalyses the reaction L-glutamyl-tRNA(Gln) + L-glutamine + ATP + H2O = L-glutaminyl-tRNA(Gln) + L-glutamate + ADP + phosphate + H(+). Functionally, allows the formation of correctly charged Gln-tRNA(Gln) through the transamidation of misacylated Glu-tRNA(Gln) in organisms which lack glutaminyl-tRNA synthetase. The reaction takes place in the presence of glutamine and ATP through an activated gamma-phospho-Glu-tRNA(Gln). In Fusobacterium nucleatum subsp. nucleatum (strain ATCC 25586 / DSM 15643 / BCRC 10681 / CIP 101130 / JCM 8532 / KCTC 2640 / LMG 13131 / VPI 4355), this protein is Glutamyl-tRNA(Gln) amidotransferase subunit A.